Here is a 225-residue protein sequence, read N- to C-terminus: NAD(P)H-quinone oxidoreductase subunit K, chloroplastic (225 aa).

[4Fe-4S] cluster is bound by residues cysteine 43, cysteine 44, cysteine 108, and cysteine 139.

The protein belongs to the complex I 20 kDa subunit family. In terms of assembly, NDH is composed of at least 16 different subunits, 5 of which are encoded in the nucleus. [4Fe-4S] cluster is required as a cofactor.

The protein resides in the plastid. Its subcellular location is the chloroplast thylakoid membrane. It carries out the reaction a plastoquinone + NADH + (n+1) H(+)(in) = a plastoquinol + NAD(+) + n H(+)(out). The enzyme catalyses a plastoquinone + NADPH + (n+1) H(+)(in) = a plastoquinol + NADP(+) + n H(+)(out). Functionally, NDH shuttles electrons from NAD(P)H:plastoquinone, via FMN and iron-sulfur (Fe-S) centers, to quinones in the photosynthetic chain and possibly in a chloroplast respiratory chain. The immediate electron acceptor for the enzyme in this species is believed to be plastoquinone. Couples the redox reaction to proton translocation, and thus conserves the redox energy in a proton gradient. This is NAD(P)H-quinone oxidoreductase subunit K, chloroplastic from Agrostis stolonifera (Creeping bentgrass).